A 105-amino-acid chain; its full sequence is Flagellar transcriptional regulator FlhD (105 aa).

Belongs to the FlhD family. In terms of assembly, homodimer; disulfide-linked. Forms a heterohexamer composed of two FlhC and four FlhD subunits. Each FlhC binds a FlhD dimer, forming a heterotrimer, and a hexamer assembles by dimerization of two heterotrimers.

Its subcellular location is the cytoplasm. Functions in complex with FlhC as a master transcriptional regulator that regulates transcription of several flagellar and non-flagellar operons by binding to their promoter region. Activates expression of class 2 flagellar genes, including fliA, which is a flagellum-specific sigma factor that turns on the class 3 genes. Also regulates genes whose products function in a variety of physiological pathways. The chain is Flagellar transcriptional regulator FlhD from Cupriavidus necator (strain ATCC 17699 / DSM 428 / KCTC 22496 / NCIMB 10442 / H16 / Stanier 337) (Ralstonia eutropha).